The primary structure comprises 230 residues: Cytochrome c oxidase subunit 2 (230 aa).

Topologically, residues 1 to 14 are mitochondrial intermembrane; sequence MAHPSQLGFQDAAS. A helical membrane pass occupies residues 15–45; that stretch reads PVMEELLHFHDHTLMIVFLISTLVLYIIMAM. The Mitochondrial matrix portion of the chain corresponds to 46–59; it reads VSTKLTNKYILDSQ. A helical membrane pass occupies residues 60-87; it reads EIEIVWTILPAVILIMIALPSLRILYLM. Residues 88-230 lie on the Mitochondrial intermembrane side of the membrane; the sequence is DEINDPHLTI…SWSSLMLEEA (143 aa). His-161, Cys-196, Glu-198, Cys-200, His-204, and Met-207 together coordinate Cu cation. Mg(2+) is bound at residue Glu-198.

The protein belongs to the cytochrome c oxidase subunit 2 family. As to quaternary structure, component of the cytochrome c oxidase (complex IV, CIV), a multisubunit enzyme composed of 14 subunits. The complex is composed of a catalytic core of 3 subunits MT-CO1, MT-CO2 and MT-CO3, encoded in the mitochondrial DNA, and 11 supernumerary subunits COX4I, COX5A, COX5B, COX6A, COX6B, COX6C, COX7A, COX7B, COX7C, COX8 and NDUFA4, which are encoded in the nuclear genome. The complex exists as a monomer or a dimer and forms supercomplexes (SCs) in the inner mitochondrial membrane with NADH-ubiquinone oxidoreductase (complex I, CI) and ubiquinol-cytochrome c oxidoreductase (cytochrome b-c1 complex, complex III, CIII), resulting in different assemblies (supercomplex SCI(1)III(2)IV(1) and megacomplex MCI(2)III(2)IV(2)). Found in a complex with TMEM177, COA6, COX18, COX20, SCO1 and SCO2. Interacts with TMEM177 in a COX20-dependent manner. Interacts with COX20. Interacts with COX16. Cu cation is required as a cofactor.

The protein localises to the mitochondrion inner membrane. It catalyses the reaction 4 Fe(II)-[cytochrome c] + O2 + 8 H(+)(in) = 4 Fe(III)-[cytochrome c] + 2 H2O + 4 H(+)(out). Functionally, component of the cytochrome c oxidase, the last enzyme in the mitochondrial electron transport chain which drives oxidative phosphorylation. The respiratory chain contains 3 multisubunit complexes succinate dehydrogenase (complex II, CII), ubiquinol-cytochrome c oxidoreductase (cytochrome b-c1 complex, complex III, CIII) and cytochrome c oxidase (complex IV, CIV), that cooperate to transfer electrons derived from NADH and succinate to molecular oxygen, creating an electrochemical gradient over the inner membrane that drives transmembrane transport and the ATP synthase. Cytochrome c oxidase is the component of the respiratory chain that catalyzes the reduction of oxygen to water. Electrons originating from reduced cytochrome c in the intermembrane space (IMS) are transferred via the dinuclear copper A center (CU(A)) of subunit 2 and heme A of subunit 1 to the active site in subunit 1, a binuclear center (BNC) formed by heme A3 and copper B (CU(B)). The BNC reduces molecular oxygen to 2 water molecules using 4 electrons from cytochrome c in the IMS and 4 protons from the mitochondrial matrix. The sequence is that of Cytochrome c oxidase subunit 2 (MT-CO2) from Squalus acanthias (Spiny dogfish).